A 390-amino-acid chain; its full sequence is 23S rRNA (uracil(747)-C(5))-methyltransferase RlmC (390 aa).

4 residues coordinate [4Fe-4S] cluster: Cys12, Cys20, Cys23, and Cys100. Positions 225, 254, 275, and 322 each coordinate S-adenosyl-L-methionine. The active-site Nucleophile is the Cys349.

This sequence belongs to the class I-like SAM-binding methyltransferase superfamily. RNA M5U methyltransferase family. RlmC subfamily.

It catalyses the reaction uridine(747) in 23S rRNA + S-adenosyl-L-methionine = 5-methyluridine(747) in 23S rRNA + S-adenosyl-L-homocysteine + H(+). Functionally, catalyzes the formation of 5-methyl-uridine at position 747 (m5U747) in 23S rRNA. The chain is 23S rRNA (uracil(747)-C(5))-methyltransferase RlmC from Shewanella baltica (strain OS155 / ATCC BAA-1091).